Reading from the N-terminus, the 500-residue chain is L-arabinose isomerase (500 aa).

Mn(2+)-binding residues include E306, E333, H350, and H450.

It belongs to the arabinose isomerase family. In terms of assembly, homohexamer. Mn(2+) serves as cofactor.

The catalysed reaction is beta-L-arabinopyranose = L-ribulose. The protein operates within carbohydrate degradation; L-arabinose degradation via L-ribulose; D-xylulose 5-phosphate from L-arabinose (bacterial route): step 1/3. In terms of biological role, catalyzes the conversion of L-arabinose to L-ribulose. This Yersinia pseudotuberculosis serotype O:3 (strain YPIII) protein is L-arabinose isomerase.